The chain runs to 2470 residues: Serine/threonine-protein kinase mTor (2470 aa).

HEAT repeat units lie at residues 172–209 (QHILTFFEVIFNAIFDPKPAIRESAGEALRAALIVTAQ), 746–785 (SYMNPILKALVPKLHEPESNPGVILNVLRTIGDLAEVNGG), 791–829 (LWADDLLSILLEMLGDAGSPDKRGVALWTLGQLISATGR), 835–873 (HKYPVLIDILINFLKTEQRRSIRRETIRVLGLLGAMDPY), 962–999 (PYLAQVLPNLLDNVRTADNNLREFLFQQLAILVAFVKL), 1043–1080 (DYLAELIPQILRVLQHDNSKDRMVTRRLLQALQKFGST), 1083–1122 (YYLPLILPPIVKLFDSPYVPQQVSMVALETINNLACQLDF), and 1124–1160 (DFSSRIIHPLVRVLDAEPELRDQAMTTLRSLAKQLGK). One can recognise an FAT domain in the interval 1349–1903 (LLGTRAMACR…VYPLTVASKS (555 aa)). 2 TPR repeats span residues 1407–1440 (ANELNVQGRWYEKLHNWDEALEHYERNLKTDSSD) and 1718–1751 (MATWQNKLQDSIRPDAIQGALECFEKATSYDPNW). An HEAT 9 repeat occupies 1854-1891 (NTWLQVIPQLIARIDTHRQLVGQLIHQLLMDIGKNHPQ). Residues 2077-2389 (IKTNLQVITS…SLSNSVEDSL (313 aa)) form the PI3K/PI4K catalytic domain. The segment at 2083 to 2089 (VITSKQR) is G-loop. The catalytic loop stretch occupies residues 2256–2264 (GLGDRHPSN). Residues 2276–2301 (HIDFGDCFEVAMTREKFPEKIPFRLT) form an activation loop region. Positions 2364–2389 (AGAGAPGGRGGSGMQDSLSNSVEDSL) are disordered. Gly residues predominate over residues 2367 to 2376 (GAPGGRGGSG). Polar residues predominate over residues 2377–2386 (MQDSLSNSVE). The FATC domain maps to 2438–2470 (KSVNEQSQVELLIQQATNNENLCQCYIGWCPFW).

Belongs to the PI3/PI4-kinase family. In terms of assembly, may be part of a minimal complex, TORC1, consisting of mTor, raptor and lst8. May be part of a minimal complex, TORC2, consisting of mTor, rictor and lst8. Self-associates; assembles into homomultimeric complexes. Component of a multiprotein complex.

It carries out the reaction L-seryl-[protein] + ATP = O-phospho-L-seryl-[protein] + ADP + H(+). The enzyme catalyses L-threonyl-[protein] + ATP = O-phospho-L-threonyl-[protein] + ADP + H(+). Functionally, promotes cell and tissue growth, maintains tissue homeostatis and controls responses to environmental stress and aging. Regulates growth during animal development by coupling growth factor signaling to nutrient availability. Central regulators of autophagy. May be involved in atg1 phosphorylation. May also be involved, directly or indirectly, in the control of neuronal function. Phosphorylates S6K/p70S6K, in vitro. May regulate the activity of S6K. Overexpression inhibits growth and reduces cell size. Affects the timing of neuronal cell differentiation. Hyperactivation of the signaling leads to accelerated differentiation, whereas inhibition of the signaling retards differentiation. Thus, in addition to controlling growth of the cell in which it resides, it can also influence growth of distant cells and organs during development via a humoral mechanism. As part of the TORC1 complex regulates energy homeostasis and promotes certain aspects of larval growth by negatively regulating REPTOR. REPTOR functions downstream of TORC1 to regulate the expression of stress response genes in response to TORC1 inhibition resulting from nutrient deprivation. When TORC1 activity is high it phosphorylates REPTOR which inhibits its recruitment into the nucleus and antagonizes their function. This function is essential under normal feeding conditions to promote TORC1-dependent growth during larval development and, in adults and larvae to prevent the REPTOR-dependent expression of nutrient stress response genes. In short, during development, it primarily controls growth, whereas in the adult, where there is relatively little growth, it controls aging and other aspects of nutrient-related physiology. Rag GTPases act as activators of TORC1 in response to amino acid signals. The protein is Serine/threonine-protein kinase mTor of Drosophila melanogaster (Fruit fly).